Reading from the N-terminus, the 319-residue chain is Homoserine kinase (319 aa).

100-110 (PLSSGMGSSAS) serves as a coordination point for ATP.

The protein belongs to the GHMP kinase family. Homoserine kinase subfamily.

It is found in the cytoplasm. It catalyses the reaction L-homoserine + ATP = O-phospho-L-homoserine + ADP + H(+). It participates in amino-acid biosynthesis; L-threonine biosynthesis; L-threonine from L-aspartate: step 4/5. In terms of biological role, catalyzes the ATP-dependent phosphorylation of L-homoserine to L-homoserine phosphate. This Chloroherpeton thalassium (strain ATCC 35110 / GB-78) protein is Homoserine kinase.